The primary structure comprises 359 residues: Quinolinate synthase (359 aa).

Iminosuccinate is bound by residues H81 and S99. C144 is a binding site for [4Fe-4S] cluster. Iminosuccinate-binding positions include 170–172 (YVN) and S187. Position 229 (C229) interacts with [4Fe-4S] cluster. Residues 255–257 (HPE) and T272 each bind iminosuccinate. A [4Fe-4S] cluster-binding site is contributed by C315.

It belongs to the quinolinate synthase family. Type 2 subfamily. [4Fe-4S] cluster is required as a cofactor.

Its subcellular location is the cytoplasm. The enzyme catalyses iminosuccinate + dihydroxyacetone phosphate = quinolinate + phosphate + 2 H2O + H(+). Its pathway is cofactor biosynthesis; NAD(+) biosynthesis; quinolinate from iminoaspartate: step 1/1. Functionally, catalyzes the condensation of iminoaspartate with dihydroxyacetone phosphate to form quinolinate. This chain is Quinolinate synthase, found in Sinorhizobium fredii (strain NBRC 101917 / NGR234).